The following is a 149-amino-acid chain: Calmodulin (149 aa).

Residue alanine 2 is modified to N-acetylalanine. EF-hand domains are found at residues 8 to 43 (EQIS…LGQN), 44 to 79 (PTEA…KMRD), 81 to 116 (DSEE…LGEK), and 117 to 149 (LTDN…MLSK). The Ca(2+) site is built by aspartate 21, aspartate 23, aspartate 25, threonine 27, glutamate 32, aspartate 57, aspartate 59, asparagine 61, threonine 63, glutamate 68, aspartate 94, aspartate 96, asparagine 98, tyrosine 100, glutamate 105, aspartate 130, aspartate 132, aspartate 134, glutamine 136, and glutamate 141.

This sequence belongs to the calmodulin family. Trimethylation of Lys-116 observed in other calmodulins is absent here.

In terms of biological role, calmodulin mediates the control of a large number of enzymes, ion channels and other proteins by Ca(2+). Among the enzymes to be stimulated by the calmodulin-Ca(2+) complex are a number of protein kinases and phosphatases. The chain is Calmodulin (CMD1) from Pleurotus cornucopiae (Cornucopia mushroom).